The sequence spans 131 residues: UPF0102 protein YraN (131 aa).

The span at 1 to 19 (MATVPTRSGSPRQLTTKQT) shows a compositional bias: polar residues. Positions 1 to 21 (MATVPTRSGSPRQLTTKQTGD) are disordered.

The protein belongs to the UPF0102 family.

In Escherichia coli (strain K12 / MC4100 / BW2952), this protein is UPF0102 protein YraN.